The sequence spans 252 residues: 3-dehydroquinate dehydratase (252 aa).

3-dehydroquinate contacts are provided by residues 46–48 and Arg-82; that span reads EWR. His-143 serves as the catalytic Proton donor/acceptor. Lys-170 functions as the Schiff-base intermediate with substrate in the catalytic mechanism. Arg-212, Ser-231, and Gln-235 together coordinate 3-dehydroquinate.

It belongs to the type-I 3-dehydroquinase family. In terms of assembly, homodimer.

The catalysed reaction is 3-dehydroquinate = 3-dehydroshikimate + H2O. It functions in the pathway metabolic intermediate biosynthesis; chorismate biosynthesis; chorismate from D-erythrose 4-phosphate and phosphoenolpyruvate: step 3/7. In terms of biological role, involved in the third step of the chorismate pathway, which leads to the biosynthesis of aromatic amino acids. Catalyzes the cis-dehydration of 3-dehydroquinate (DHQ) and introduces the first double bond of the aromatic ring to yield 3-dehydroshikimate. This Listeria innocua serovar 6a (strain ATCC BAA-680 / CLIP 11262) protein is 3-dehydroquinate dehydratase.